A 142-amino-acid polypeptide reads, in one-letter code: MAMAVEFKTYVDQACRAAEEFVNIYYETMDKRRRALTRLYLDKATLIWNGNVVTGLEALANFFDMLPSSEFQVNMLDCQPVHEQATQSQTTVLVVTSGTVKFDGNKQHYFNQNFLLTAQTTANNTVWKIASDCFRFQDWATI.

The 120-residue stretch at 17-136 (AAEEFVNIYY…WKIASDCFRF (120 aa)) folds into the NTF2 domain.

In terms of assembly, associates with NXF1, NXF2, NXF3 and NXF5.

It is found in the nucleus. Its subcellular location is the cytoplasm. In terms of biological role, regulator of protein export for NES-containing proteins. Also plays a role in mRNA nuclear export. The polypeptide is NTF2-related export protein 2 (NXT2) (Bos taurus (Bovine)).